The following is a 953-amino-acid chain: Protein translocase subunit SecA 1 (953 aa).

Residues Gln83, 101 to 105 (GEGKT), and Asp490 contribute to the ATP site. The segment covering 854-867 (AAAAAAKASDSAAK) has biased composition (low complexity). Residues 854 to 953 (AAAAAAKASD…DRPAKSHRKG (100 aa)) are disordered. Residues 929–947 (SRRERREAARKQAKADRPA) are compositionally biased toward basic and acidic residues.

It belongs to the SecA family. As to quaternary structure, monomer and homodimer. Part of the essential Sec protein translocation apparatus which comprises SecA, SecYEG and auxiliary proteins SecDF. Other proteins may also be involved.

The protein localises to the cell membrane. It is found in the cytoplasm. The catalysed reaction is ATP + H2O + cellular proteinSide 1 = ADP + phosphate + cellular proteinSide 2.. Functionally, part of the Sec protein translocase complex. Interacts with the SecYEG preprotein conducting channel. Has a central role in coupling the hydrolysis of ATP to the transfer of proteins into and across the cell membrane, serving as an ATP-driven molecular motor driving the stepwise translocation of polypeptide chains across the membrane. This chain is Protein translocase subunit SecA 1, found in Mycolicibacterium smegmatis (strain ATCC 700084 / mc(2)155) (Mycobacterium smegmatis).